Reading from the N-terminus, the 466-residue chain is MGQKNHFDVIVIGSGPGGEGAAMGLTKGGKNVAIIEKESSVGGGCTHWGTIPSKALRHAVSRIIEFNSNPLFCKNNSSIHATFSTILSHAKSVIDKQTRLRQGFYDRNQCTLIFGAAHFIDAHTVAVKKADGSIDTYSADKFVIATGSRPYHPKDVDFGHPRIYDSDSILNLEHDPRHIIIYGAGVIGCEYASIFRGLDVKTDLINTRDRLLSFLDNEVSDALSYHFWNSGVVIRNDETYDKVEGTSDGVIVHLKSGKKMRADCLLYANGRTGNTDKLNLESVGLQADSRGQLVVNANYQTQVEHIYAVGDVIGYPSLASAAYDQGRFVAQAIIHGQAAHLLTEDIPTGIYTIPEISSVGRTEQELTAAKVPYEVGRASFKHLARAQIAGKDIGSLKILFHRETKEILGIHCFGERAAEIIHIGQAIMEQKGEANTIEYFVNTTFNYPTMAEAFRVAALNGLNRLF.

Residue 36 to 45 (EKESSVGGGC) coordinates FAD.

Belongs to the class-I pyridine nucleotide-disulfide oxidoreductase family. FAD serves as cofactor.

It is found in the cytoplasm. It carries out the reaction NAD(+) + NADPH = NADH + NADP(+). In terms of biological role, conversion of NADPH, generated by peripheral catabolic pathways, to NADH, which can enter the respiratory chain for energy generation. The polypeptide is Soluble pyridine nucleotide transhydrogenase (Vibrio cholerae serotype O1 (strain ATCC 39541 / Classical Ogawa 395 / O395)).